The chain runs to 150 residues: 3-hydroxyacyl-[acyl-carrier-protein] dehydratase FabZ (150 aa).

The active site involves H51.

This sequence belongs to the thioester dehydratase family. FabZ subfamily.

The protein resides in the cytoplasm. The enzyme catalyses a (3R)-hydroxyacyl-[ACP] = a (2E)-enoyl-[ACP] + H2O. Functionally, involved in unsaturated fatty acids biosynthesis. Catalyzes the dehydration of short chain beta-hydroxyacyl-ACPs and long chain saturated and unsaturated beta-hydroxyacyl-ACPs. The protein is 3-hydroxyacyl-[acyl-carrier-protein] dehydratase FabZ of Legionella pneumophila subsp. pneumophila (strain Philadelphia 1 / ATCC 33152 / DSM 7513).